Here is a 596-residue protein sequence, read N- to C-terminus: Polyphenol oxidase B, chloroplastic (596 aa).

Positions 1–23 (MASVVCNSSSSTTTTTLKTPFTS) are disordered. A chloroplast-targeting transit peptide spans 1 to 87 (MASVVCNSSS…ANAIPLAASA (87 aa)). Over residues 8–23 (SSSSTTTTTLKTPFTS) the composition is skewed to low complexity. 2 disulfides stabilise this stretch: Cys98/Cys114 and Cys113/Cys182. Residues His181, His199, His208, His329, His333, and His371 each coordinate Cu cation. The 2'-(S-cysteinyl)-histidine (Cys-His) cross-link spans 185-199 (CNGAYIIGGKELQVH).

The protein belongs to the tyrosinase family. Requires Cu(2+) as cofactor.

It is found in the plastid. It localises to the chloroplast thylakoid lumen. It carries out the reaction 2 catechol + O2 = 2 1,2-benzoquinone + 2 H2O. Catalyzes the oxidation of mono- and o-diphenols to o-diquinones. The polypeptide is Polyphenol oxidase B, chloroplastic (Solanum lycopersicum (Tomato)).